The primary structure comprises 632 residues: Phosphomethylpyrimidine synthase (632 aa).

Substrate contacts are provided by residues Asn237, Met266, Tyr295, His331, Ser351–Gly353, Asp392–Arg395, and Glu431. Position 435 (His435) interacts with Zn(2+). Tyr458 serves as a coordination point for substrate. Position 499 (His499) interacts with Zn(2+). Residues Cys579, Cys582, and Cys587 each coordinate [4Fe-4S] cluster.

Belongs to the ThiC family. As to quaternary structure, homodimer. [4Fe-4S] cluster is required as a cofactor.

The enzyme catalyses 5-amino-1-(5-phospho-beta-D-ribosyl)imidazole + S-adenosyl-L-methionine = 4-amino-2-methyl-5-(phosphooxymethyl)pyrimidine + CO + 5'-deoxyadenosine + formate + L-methionine + 3 H(+). It participates in cofactor biosynthesis; thiamine diphosphate biosynthesis. In terms of biological role, catalyzes the synthesis of the hydroxymethylpyrimidine phosphate (HMP-P) moiety of thiamine from aminoimidazole ribotide (AIR) in a radical S-adenosyl-L-methionine (SAM)-dependent reaction. The protein is Phosphomethylpyrimidine synthase of Chromobacterium violaceum (strain ATCC 12472 / DSM 30191 / JCM 1249 / CCUG 213 / NBRC 12614 / NCIMB 9131 / NCTC 9757 / MK).